Consider the following 537-residue polypeptide: Probable protein kinase UbiB (537 aa).

A helical membrane pass occupies residues 24 to 44; that stretch reads LLFEQPLLPWWLASLRLLMPW. One can recognise a Protein kinase domain in the interval 126-494; that stretch reads RFDVEPLASA…RRRQGDNWAL (369 aa). Residues 132–140 and K154 contribute to the ATP site; that span reads LASASVAQV. The Proton acceptor role is filled by D289. Transmembrane regions (helical) follow at residues 493–513 and 515–535; these read ALRLLGAGLLGGGATLAAGAV and LSAPAAWPAWLMLAAGLYLIV.

Belongs to the ABC1 family. UbiB subfamily.

It localises to the cell inner membrane. The protein operates within cofactor biosynthesis; ubiquinone biosynthesis [regulation]. Is probably a protein kinase regulator of UbiI activity which is involved in aerobic coenzyme Q (ubiquinone) biosynthesis. The sequence is that of Probable protein kinase UbiB from Pseudomonas entomophila (strain L48).